Consider the following 429-residue polypeptide: Trigger factor (429 aa).

Residues 164–249 enclose the PPIase FKBP-type domain; sequence GDWAVIDHEG…LKALKVRQAP (86 aa).

Belongs to the FKBP-type PPIase family. Tig subfamily.

The protein resides in the cytoplasm. It catalyses the reaction [protein]-peptidylproline (omega=180) = [protein]-peptidylproline (omega=0). Involved in protein export. Acts as a chaperone by maintaining the newly synthesized protein in an open conformation. Functions as a peptidyl-prolyl cis-trans isomerase. The chain is Trigger factor from Anaeromyxobacter dehalogenans (strain 2CP-C).